The following is a 204-amino-acid chain: Somatotropin (204 aa).

A signal peptide spans 1-17 (MDKVLFLLFVLSLGVSS). Q18 is subject to Pyrrolidone carboxylic acid. A Zn(2+)-binding site is contributed by H36. C69 and C177 are disulfide-bonded. Zn(2+) is bound at residue E186. An intrachain disulfide couples C194 to C202.

It belongs to the somatotropin/prolactin family.

Its subcellular location is the secreted. Growth hormone plays an important role in growth control and is involved in the regulation of several anabolic processes. Implicated as an osmoregulatory substance important for seawater adaptation. The sequence is that of Somatotropin (gh) from Trichopodus trichopterus (Three spot gourami).